A 305-amino-acid polypeptide reads, in one-letter code: Serine/threonine-protein phosphatase PP-X isozyme 1 (305 aa).

4 residues coordinate Mn(2+): aspartate 51, histidine 53, aspartate 79, and asparagine 111. The active-site Proton donor is histidine 112. Residues histidine 161 and histidine 236 each coordinate Mn(2+).

Belongs to the PPP phosphatase family. PP-4 (PP-X) subfamily. In terms of assembly, interacts with TAP46. Mn(2+) is required as a cofactor. Ubiquitous, mostly expressed in root mersitems, flowers, and vascular tissues.

The protein localises to the plastid stroma. It catalyses the reaction O-phospho-L-seryl-[protein] + H2O = L-seryl-[protein] + phosphate. The enzyme catalyses O-phospho-L-threonyl-[protein] + H2O = L-threonyl-[protein] + phosphate. This Arabidopsis thaliana (Mouse-ear cress) protein is Serine/threonine-protein phosphatase PP-X isozyme 1 (PPX1).